The following is a 115-amino-acid chain: Superoxide reductase (115 aa).

Fe cation contacts are provided by glutamate 14, histidine 16, histidine 41, histidine 47, cysteine 102, and histidine 105.

The protein belongs to the desulfoferrodoxin family. In terms of assembly, homotetramer. Fe cation is required as a cofactor.

The catalysed reaction is reduced [rubredoxin] + superoxide + 2 H(+) = oxidized [rubredoxin] + H2O2. Uses electrons from reduced NADP, by way of rubredoxin and an oxidoreductase, to catalyze the reduction of superoxide to hydrogen peroxide. This Pyrococcus horikoshii (strain ATCC 700860 / DSM 12428 / JCM 9974 / NBRC 100139 / OT-3) protein is Superoxide reductase (sorA).